The chain runs to 850 residues: DEAD-box ATP-dependent RNA helicase 26 (850 aa).

2 disordered regions span residues 60–82 (TRPERSQPEFARRSGAGGEIRAS) and 106–350 (GKFT…ENDE). A compositionally biased stretch (basic and acidic residues) spans 61-71 (RPERSQPEFAR). T109 bears the Phosphothreonine mark. At S110 the chain carries Phosphoserine. Composition is skewed to basic and acidic residues over residues 118–140 (EVVRRNVDRDTSRGPRRGREGQS) and 284–299 (GRNDRNVESGFRREPG). Composition is skewed to acidic residues over residues 315 to 325 (LEEEDSSDDDE) and 336 to 350 (LPSEDSSDEDDENDE). A Q motif motif is present at residues 382 to 410 (TRFDQFPLSPLSLKAIKDAGFETMTVVQE). The Helicase ATP-binding domain occupies 413–596 (LPIILQGKDV…HVALKRDHEF (184 aa)). 426–433 (AKTGTGKT) is a binding site for ATP. Residues 544–547 (DEAD) carry the DEAD box motif. The Helicase C-terminal domain occupies 630–777 (LLKEHIADNV…IDPEAVKRVQ (148 aa)).

Belongs to the DEAD box helicase family.

It carries out the reaction ATP + H2O = ADP + phosphate + H(+). This Arabidopsis thaliana (Mouse-ear cress) protein is DEAD-box ATP-dependent RNA helicase 26 (RH26).